Reading from the N-terminus, the 389-residue chain is S-adenosylmethionine synthase (389 aa).

His-19 serves as a coordination point for ATP. Asp-21 is a binding site for Mg(2+). Position 47 (Glu-47) interacts with K(+). Residues Glu-60 and Gln-103 each contribute to the L-methionine site. A flexible loop region spans residues 103–113 (QSGDIAQGVDR). ATP contacts are provided by residues 168 to 170 (DGK), 234 to 235 (RF), Asp-243, 249 to 250 (RK), Ala-266, and Lys-270. Residue Asp-243 participates in L-methionine binding. Lys-274 contacts L-methionine.

The protein belongs to the AdoMet synthase family. In terms of assembly, homotetramer; dimer of dimers. Mg(2+) is required as a cofactor. It depends on K(+) as a cofactor.

Its subcellular location is the cytoplasm. It carries out the reaction L-methionine + ATP + H2O = S-adenosyl-L-methionine + phosphate + diphosphate. The protein operates within amino-acid biosynthesis; S-adenosyl-L-methionine biosynthesis; S-adenosyl-L-methionine from L-methionine: step 1/1. Functionally, catalyzes the formation of S-adenosylmethionine (AdoMet) from methionine and ATP. The overall synthetic reaction is composed of two sequential steps, AdoMet formation and the subsequent tripolyphosphate hydrolysis which occurs prior to release of AdoMet from the enzyme. This chain is S-adenosylmethionine synthase, found in Nitratidesulfovibrio vulgaris (strain DSM 19637 / Miyazaki F) (Desulfovibrio vulgaris).